We begin with the raw amino-acid sequence, 244 residues long: Probable transcriptional regulatory protein DMR_30850 (244 aa).

Belongs to the TACO1 family.

It localises to the cytoplasm. The polypeptide is Probable transcriptional regulatory protein DMR_30850 (Solidesulfovibrio magneticus (strain ATCC 700980 / DSM 13731 / RS-1) (Desulfovibrio magneticus)).